The chain runs to 381 residues: Phospholipid scramblase family protein C343.06c (381 aa).

The disordered stretch occupies residues 336 to 369 (QEILKNDQETTPSTNDSSSETKSPFLSDADLDQQ). A compositionally biased stretch (polar residues) spans 344–359 (ETTPSTNDSSSETKSP).

The protein belongs to the phospholipid scramblase family.

It is found in the mitochondrion. The protein is Phospholipid scramblase family protein C343.06c of Schizosaccharomyces pombe (strain 972 / ATCC 24843) (Fission yeast).